The chain runs to 813 residues: Fibroblast growth factor receptor 2 (813 aa).

Positions 1–14 (MLLLALLAFLLVSR) are cleaved as a signal peptide. The Extracellular portion of the chain corresponds to 18–367 (RPSYSMVDDT…EDNPVPYYME (350 aa)). The 97-residue stretch at 21–117 (YSMVDDTTPE…NSHFFHVNVT (97 aa)) folds into the Ig-like C2-type 1 domain. The cysteines at positions 58 and 103 are disulfide-linked. N-linked (GlcNAc...) asparagine glycosylation is found at Asn79 and Asn115. Residues 119–143 (ASSSGDDEDDNDGSEDFTNDNNNIR) form a disordered region. The segment covering 123–136 (GDDEDDNDGSEDFT) has biased composition (acidic residues). Ig-like C2-type domains lie at 145 to 237 (PYWT…YHLD) and 246 to 348 (PILQ…AWLT). Residues 152–169 (KMEKKLHAVSAANTVKLR) form a heparin-binding region. Cys170 and Cys221 form a disulfide bridge. 5 N-linked (GlcNAc...) asparagine glycosylation sites follow: Asn231, Asn255, Asn287, Asn308, and Asn321. The cysteines at positions 268 and 332 are disulfide-linked. Residues 368-388 (IGIYSTGIFIIFCMVVVCVVC) traverse the membrane as a helical segment. Over 389-813 (RMRQGAKKKK…FQHVNGVVKT (425 aa)) the chain is Cytoplasmic. Phosphotyrosine; by autocatalysis is present on Tyr456. Positions 471-760 (LTLGKPLGEG…LTLTTNEEYL (290 aa)) constitute a Protein kinase domain. Residues 477 to 485 (LGEGCFGQV), Lys507, 555 to 557 (EYA), and Asn561 contribute to the ATP site. At Tyr576 the chain carries Phosphotyrosine; by autocatalysis. Asp616 functions as the Proton acceptor in the catalytic mechanism. Phosphotyrosine; by autocatalysis is present on residues Tyr646, Tyr647, and Tyr759. Residues 771–792 (PSFPDSSCSASSSSGDDSVFSP) show a composition bias toward low complexity. Residues 771 to 801 (PSFPDSSCSASSSSGDDSVFSPDPMPHDPCL) are disordered.

It belongs to the protein kinase superfamily. Tyr protein kinase family. Fibroblast growth factor receptor subfamily. As to quaternary structure, monomer. Homodimer after ligand binding. In terms of processing, autophosphorylated. Binding of FGF family members together with heparan sulfate proteoglycan or heparin promotes receptor dimerization and autophosphorylation on tyrosine residues. Autophosphorylation occurs in trans between the two FGFR molecules present in the dimer. Post-translationally, N-glycosylated in the endoplasmic reticulum. The N-glycan chains undergo further maturation to an Endo H-resistant form in the Golgi apparatus. Ubiquitinated. FGFR2 is rapidly ubiquitinated after autophosphorylation, leading to internalization and degradation. Subject to degradation both in lysosomes and by the proteasome. Expressed in the anterior neural plate in early neurula stage embryos. Later in development, the protein is also expressed in the eye anlagen, midbrain-hindbrain boundary and otic vesicle.

The protein resides in the cell membrane. It localises to the golgi apparatus. It is found in the cytoplasmic vesicle. The catalysed reaction is L-tyrosyl-[protein] + ATP = O-phospho-L-tyrosyl-[protein] + ADP + H(+). Present in an inactive conformation in the absence of bound ligand. Ligand binding leads to dimerization and activation by autophosphorylation on tyrosine residues. Its function is as follows. Tyrosine-protein kinase that acts as a cell-surface receptor for fibroblast growth factors and plays an essential role in the regulation of cell proliferation, differentiation, migration and apoptosis, and in the regulation of embryonic development. Required for normal embryonic patterning, limb bud development, lung morphogenesis, osteogenesis and skin development. Plays an essential role in the regulation of osteoblast differentiation, proliferation and apoptosis, and is required for normal skeleton development. Promotes cell proliferation in keratinocytes and immature osteoblasts, but promotes apoptosis in differentiated osteoblasts. Phosphorylates PLCG1, FRS2 and PAK4. Ligand binding leads to the activation of several signaling cascades. Activation of PLCG1 leads to the production of the cellular signaling molecules diacylglycerol and inositol 1,4,5-trisphosphate. Phosphorylation of FRS2 triggers recruitment of GRB2, GAB1, PIK3R1 and SOS1, and mediates activation of RAS, MAPK1/ERK2, MAPK3/ERK1 and the MAP kinase signaling pathway, as well as of the AKT1 signaling pathway. FGFR2 signaling is down-regulated by ubiquitination, internalization and degradation. Mutations that lead to constitutive kinase activation or impair normal FGFR2 maturation, internalization and degradation lead to aberrant signaling. Over-expressed FGFR2 promotes activation of STAT1. This is Fibroblast growth factor receptor 2 (fgfr2) from Xenopus laevis (African clawed frog).